The chain runs to 1730 residues: Meiosis regulator and mRNA stability factor 1 (1730 aa).

Ser-65 is modified (phosphoserine). Residues 352 to 489 (IGVFWDIENC…ALLHHANQLI (138 aa)) enclose the NYN domain. Positions 655–668 (MESKSGNRNSDHQQ) are enriched in basic and acidic residues. A disordered region spans residues 655-722 (MESKSGNRNS…VNSPVEKKKR (68 aa)). Tyr-698 is modified (phosphotyrosine). Residues 781-860 (VDIQVSNVDY…KKILVSLSTG (80 aa)) enclose the RRM domain. HTH OST-type domains follow at residues 865–939 (SLSL…SPLG) and 993–1069 (SLKV…HNKP). Phosphoserine occurs at positions 1081 and 1083. 6 consecutive HTH OST-type domains span residues 1089-1163 (QLIQ…LTHR), 1165-1241 (QVKR…RKRE), 1249-1324 (RTKQ…TEVE), 1325-1400 (RFKA…INRK), 1401-1475 (SLRS…VKLT), and 1476-1550 (SLYL…LKND). The interval 1667–1714 (VQKGNLSCDSSPSSPAASPAPPGPSSEAPRPLFSKDAVESPAKKQPKN) is disordered. Position 1684 is a phosphoserine (Ser-1684).

In terms of assembly, interacts with LIMK2. In terms of tissue distribution, predominantly present in oocytes and barely detectable in granulosa cells (at protein level).

Its subcellular location is the peroxisome. Essential regulator of oogenesis required for female meiotic progression to repress transposable elements and preventing their mobilization, which is essential for the germline integrity. Probably acts via some RNA metabolic process, equivalent to the piRNA system in males, which mediates the repression of transposable elements during meiosis by forming complexes composed of RNAs and governs the methylation and subsequent repression of transposons. Also required to protect from DNA double-strand breaks. The protein is Meiosis regulator and mRNA stability factor 1 (Marf1) of Mus musculus (Mouse).